Here is a 475-residue protein sequence, read N- to C-terminus: ATP synthase subunit beta (475 aa).

160-167 (GGAGVGKT) serves as a coordination point for ATP.

Belongs to the ATPase alpha/beta chains family. As to quaternary structure, F-type ATPases have 2 components, CF(1) - the catalytic core - and CF(0) - the membrane proton channel. CF(1) has five subunits: alpha(3), beta(3), gamma(1), delta(1), epsilon(1). CF(0) has three main subunits: a(1), b(2) and c(9-12). The alpha and beta chains form an alternating ring which encloses part of the gamma chain. CF(1) is attached to CF(0) by a central stalk formed by the gamma and epsilon chains, while a peripheral stalk is formed by the delta and b chains.

Its subcellular location is the cell membrane. It carries out the reaction ATP + H2O + 4 H(+)(in) = ADP + phosphate + 5 H(+)(out). Its function is as follows. Produces ATP from ADP in the presence of a proton gradient across the membrane. The catalytic sites are hosted primarily by the beta subunits. The protein is ATP synthase subunit beta of Mycolicibacterium vanbaalenii (strain DSM 7251 / JCM 13017 / BCRC 16820 / KCTC 9966 / NRRL B-24157 / PYR-1) (Mycobacterium vanbaalenii).